The following is a 647-amino-acid chain: Threonine--tRNA ligase (647 aa).

The TGS domain occupies methionine 1–threonine 61. A catalytic region spans residues aspartate 240–proline 538. Zn(2+) is bound by residues cysteine 334, histidine 385, and histidine 515.

Belongs to the class-II aminoacyl-tRNA synthetase family. Homodimer. It depends on Zn(2+) as a cofactor.

The protein localises to the cytoplasm. It catalyses the reaction tRNA(Thr) + L-threonine + ATP = L-threonyl-tRNA(Thr) + AMP + diphosphate + H(+). Its function is as follows. Catalyzes the attachment of threonine to tRNA(Thr) in a two-step reaction: L-threonine is first activated by ATP to form Thr-AMP and then transferred to the acceptor end of tRNA(Thr). Also edits incorrectly charged L-seryl-tRNA(Thr). This is Threonine--tRNA ligase from Streptococcus pyogenes serotype M28 (strain MGAS6180).